Reading from the N-terminus, the 410-residue chain is BRCA1-A complex subunit Abraxas 1 (410 aa).

In terms of domain architecture, MPN spans threonine 7–leucine 160. Position 48 is a phosphoserine (serine 48). A coiled-coil region spans residues serine 208–glutamine 261. The interval aspartate 354–phenylalanine 410 is disordered. Polar residues predominate over residues asparagine 368–proline 389. A phosphoserine mark is found at serine 387 and serine 388. Threonine 391 carries the post-translational modification Phosphothreonine. Serine 407 is modified (phosphoserine). Positions serine 407–phenylalanine 410 match the pSXXF motif motif.

It belongs to the FAM175 family. Abraxas subfamily. In terms of assembly, component of the ARISC complex, at least composed of UIMC1/RAP80, ABRAXAS1, BRCC3/BRCC36, BABAM2 and BABAM1/NBA1. Component of the BRCA1-A complex, at least composed of the BRCA1, BARD1, UIMC1/RAP80, ABRAXAS1, BRCC3/BRCC36, BABAM2 and BABAM1/NBA1. In the complex, interacts directly with UIMC1/RAP80, BRCC3/BRCC36 and BABAM2. Homodimer. Interacts directly (when phosphorylated at Ser-407) with BRCA1. The phosphorylated homodimer can interact directly with two BRCA1 chains, giving rise to a heterotetramer. Binds polyubiquitin. Post-translationally, phosphorylation of Ser-407 of the pSXXF motif by ATM or ATR constitutes a specific recognition motif for the BRCT domain of BRCA1.

It localises to the nucleus. Its function is as follows. Involved in DNA damage response and double-strand break (DSB) repair. Component of the BRCA1-A complex, acting as a central scaffold protein that assembles the various components of the complex and mediates the recruitment of BRCA1. The BRCA1-A complex specifically recognizes 'Lys-63'-linked ubiquitinated histones H2A and H2AX at DNA lesion sites, leading to target the BRCA1-BARD1 heterodimer to sites of DNA damage at DSBs. This complex also possesses deubiquitinase activity that specifically removes 'Lys-63'-linked ubiquitin on histones H2A and H2AX. In Bos taurus (Bovine), this protein is BRCA1-A complex subunit Abraxas 1.